Here is a 429-residue protein sequence, read N- to C-terminus: Histidine--tRNA ligase (429 aa).

It belongs to the class-II aminoacyl-tRNA synthetase family. In terms of assembly, homodimer.

It is found in the cytoplasm. The enzyme catalyses tRNA(His) + L-histidine + ATP = L-histidyl-tRNA(His) + AMP + diphosphate + H(+). In Rippkaea orientalis (strain PCC 8801 / RF-1) (Cyanothece sp. (strain PCC 8801)), this protein is Histidine--tRNA ligase.